A 148-amino-acid chain; its full sequence is Large ribosomal subunit protein bL9 (148 aa).

The protein belongs to the bacterial ribosomal protein bL9 family.

Functionally, binds to the 23S rRNA. This Staphylococcus epidermidis (strain ATCC 35984 / DSM 28319 / BCRC 17069 / CCUG 31568 / BM 3577 / RP62A) protein is Large ribosomal subunit protein bL9.